We begin with the raw amino-acid sequence, 332 residues long: Cytochrome c oxidase subunit 2 (332 aa).

The first 20 residues, 1 to 20 (MKIPGSVITLLIGVVITVVS), serve as a signal peptide directing secretion. 2 helical membrane passes run 48-68 (MMTI…YCLI) and 87-107 (VPLE…LAVY). Positions 214, 249, 253, and 257 each coordinate Cu cation.

The protein belongs to the cytochrome c oxidase subunit 2 family. Cu cation is required as a cofactor.

The protein resides in the cell membrane. It catalyses the reaction 4 Fe(II)-[cytochrome c] + O2 + 8 H(+)(in) = 4 Fe(III)-[cytochrome c] + 2 H2O + 4 H(+)(out). Functionally, subunits I and II form the functional core of the enzyme complex. Electrons originating in cytochrome c are transferred via heme a and Cu(A) to the binuclear center formed by heme a3 and Cu(B). This Synechocystis sp. (strain ATCC 27184 / PCC 6803 / Kazusa) protein is Cytochrome c oxidase subunit 2 (ctaC).